A 311-amino-acid polypeptide reads, in one-letter code: Beta-lactamase (311 aa).

The tat-type signal signal peptide spans 1–34; it reads MRLTQAPPSRRTLMTLGAGATMAALLPAGGAAYA. Ser-87 functions as the Acyl-ester intermediate in the catalytic mechanism. 255 to 257 serves as a coordination point for substrate; it reads KTG.

It belongs to the class-A beta-lactamase family. In terms of processing, predicted to be exported by the Tat system. The position of the signal peptide cleavage has not been experimentally proven.

The enzyme catalyses a beta-lactam + H2O = a substituted beta-amino acid. This Kitasatospora aureofaciens (Streptomyces aureofaciens) protein is Beta-lactamase (bla).